The sequence spans 157 residues: Endoribonuclease YbeY (157 aa).

Zn(2+) is bound by residues histidine 122, histidine 126, and histidine 132.

It belongs to the endoribonuclease YbeY family. Requires Zn(2+) as cofactor.

Its subcellular location is the cytoplasm. Single strand-specific metallo-endoribonuclease involved in late-stage 70S ribosome quality control and in maturation of the 3' terminus of the 16S rRNA. The chain is Endoribonuclease YbeY from Bacillus subtilis (strain 168).